A 491-amino-acid polypeptide reads, in one-letter code: MFAKIALVGRPNVGKSTLFNRLIRSNRAITHDMPGVTRDRMEGIVRGRNKRPFGIIDTGGITLDGHAAVAEGPAGIRGFEAEILRQAEEAIAECVAVCLVVDGREGLLPFDEHLASYLRRTGKPVLVVVNKVDGIEKEDVLTAEFHILGFPVLAVSAEHGHNLRWLESEMRDLLPEEDEDGIDDDAADATAVAIADADAETEDGASASETEEDITEETVEDEPEAPLRLCMLGRPNAGKSSLVNALTGTNRMIVSDVAGTTRDSVDVAFEKDGLSYTFVDTAGVRRRSRITDTVERYSVNSSLKSTTKAHVTLLVLDAVEGITSQDKRLIELLDERKTPFMVLVNKMDLVPAKAREDGKRNFRDLLNFCQHVPLLFVSAKTGYELRSIVPLAARIRRECSVRIPTGQLNRAMEEVITRHQPPVVRRVRPKFYYMTQAESQPPTFVLFVNDADRIQAPYAKYIEKSLRRLFGIEHAPMRVHFRSSHKKNSEK.

The region spanning 3 to 178 (AKIALVGRPN…EMRDLLPEED (176 aa)) is the EngA-type G 1 domain. GTP contacts are provided by residues 9–16 (GRPNVGKS), 57–61 (DTGGI), and 130–133 (NKVD). The segment covering 198–224 (DAETEDGASASETEEDITEETVEDEPE) has biased composition (acidic residues). The interval 198 to 225 (DAETEDGASASETEEDITEETVEDEPEA) is disordered. The EngA-type G 2 domain occupies 227–400 (LRLCMLGRPN…LAARIRRECS (174 aa)). Residues 233 to 240 (GRPNAGKS), 280 to 284 (DTAGV), and 345 to 348 (NKMD) contribute to the GTP site. Residues 401 to 485 (VRIPTGQLNR…PMRVHFRSSH (85 aa)) form the KH-like domain.

The protein belongs to the TRAFAC class TrmE-Era-EngA-EngB-Septin-like GTPase superfamily. EngA (Der) GTPase family. In terms of assembly, associates with the 50S ribosomal subunit.

In terms of biological role, GTPase that plays an essential role in the late steps of ribosome biogenesis. This is GTPase Der from Nitratidesulfovibrio vulgaris (strain ATCC 29579 / DSM 644 / CCUG 34227 / NCIMB 8303 / VKM B-1760 / Hildenborough) (Desulfovibrio vulgaris).